The following is a 2098-amino-acid chain: 1-phosphatidylinositol 3-phosphate 5-kinase (2098 aa).

The tract at residues 1-45 is disordered; sequence MATDDKTSPTLDSANDLPRSPTSPSHLTHFKPLTPDQDEPPFKSA. Position 2 is an N-acetylalanine (Ala-2). A phosphoserine; by autocatalysis mark is found at Ser-23 and Ser-48. The interval 57–123 is disordered; sequence KERAEGGQGE…EPTFGGHDPR (67 aa). Residues 66–88 are compositionally biased toward polar residues; sequence EQQPLSGSWTSPQLPSRTQSVRS. Residue Ser-88 is modified to Phosphoserine. An FYVE-type zinc finger spans residues 158–218; the sequence is DSQCKECYDC…ACTYCRKIAL (61 aa). Zn(2+) contacts are provided by Cys-164, Cys-167, Cys-180, Cys-183, Cys-188, Cys-191, Cys-210, and Cys-213. A disordered region spans residues 292–329; that stretch reads VQEDAGKSPARNRSASITNLSLDRSGSPMVPSYETSVS. Ser-299, Ser-307, and Ser-312 each carry phosphoserine. A compositionally biased stretch (polar residues) spans 302–315; the sequence is RNRSASITNLSLDR. Phosphoserine; by PKB/AKT1 or PKB/AKT2 is present on Ser-318. Ser-329 carries the post-translational modification Phosphoserine. The DEP domain occupies 365 to 440; sequence HSSGMEFQDH…DEYALYRPLQ (76 aa). Positions 442 to 459 are enriched in polar residues; it reads TEFSETPSPDSDSVNSVE. Positions 442 to 469 are disordered; the sequence is TEFSETPSPDSDSVNSVEGHSEPSWFKD. Basic and acidic residues predominate over residues 460–469; the sequence is GHSEPSWFKD. Ser-475 is modified (phosphoserine). A disordered region spans residues 484-505; that stretch reads GDDNLANSASPSKRTSVSSFQS. Polar residues predominate over residues 488–505; sequence LANSASPSKRTSVSSFQS. Residues 616 to 868 are chaperonin-like domain; sequence MMALLQQLLH…MICVAYHSQL (253 aa). Disordered stretches follow at residues 1161–1191 and 1512–1616; these read RIQP…NEGD and FQQE…STDS. The segment covering 1177-1186 has biased composition (low complexity); the sequence is SSTSSGQSGS. Position 1522 is a phosphoserine; by autocatalysis (Ser-1522). Phosphoserine occurs at positions 1544 and 1549. The segment covering 1562-1578 has biased composition (low complexity); that stretch reads LTTLSSQSSTSSTHLQL. Position 1669 is a phosphoserine; by autocatalysis (Ser-1669). Residues 1692 to 1799 are disordered; the sequence is QWNSAEEGLP…PQDEVDGGDT (108 aa). Residues 1704–1714 show a composition bias toward low complexity; sequence STSDSRPKSSS. Polar residues predominate over residues 1723–1735; it reads GGQTNRTTETEPQ. Ser-1754 is modified (phosphoserine). Residues 1758-2084 form the PIPK domain; the sequence is SSQKRETLRG…RFCEAMDKYF (327 aa). The catalytic stretch occupies residues 1842 to 2098; it reads EEDFIRSLSH…DHWTGLGLNC (257 aa). Phosphoserine; by autocatalysis occurs at positions 1969 and 2053.

As to quaternary structure, component of the PI(3,5)P2 regulatory complex/PAS complex, at least composed of PIKFYVE, FIG4 and VAC14. VAC14 nucleates the assembly of the complex and serves as a scaffold by pentamerizing into a star-shaped structure, which can bind a single copy each of PIKFYVE and FIG4 and coordinates their activities. Interacts (via chaperonin-like domain) with RABEPK; the interaction recruits RABEPK to the endosomal membrane. Interacts with SPAG9. Interacts with EGFR. Post-translationally, autophosphorylates which inhibits its own phosphatidylinositol 3-phosphate 5-kinase activity, stimulates FIG4 lipid phosphatase activity and down-regulates lipid product formation. Dephosphorylated by FIG4 in the PI(3,5)P2 regulatory complex, at Ser-48, Ser-1669 and Ser-2053. Phosphorylated in response to insulin at Ser-318 in a protein kinase B (PKB)-dependent manner.

Its subcellular location is the endosome membrane. The protein localises to the early endosome membrane. The protein resides in the cytoplasmic vesicle. It is found in the phagosome membrane. It localises to the late endosome membrane. The enzyme catalyses a 1,2-diacyl-sn-glycero-3-phospho-(1D-myo-inositol-3-phosphate) + ATP = a 1,2-diacyl-sn-glycero-3-phospho-(1D-myo-inositol-3,5-bisphosphate) + ADP + H(+). The catalysed reaction is a 1,2-diacyl-sn-glycero-3-phospho-(1D-myo-inositol) + ATP = a 1,2-diacyl-sn-glycero-3-phospho-(1D-myo-inositol-5-phosphate) + ADP + H(+). It carries out the reaction L-seryl-[protein] + ATP = O-phospho-L-seryl-[protein] + ADP + H(+). Inhibited by apilimod and YM201636. Dual specificity kinase implicated in myriad essential cellular processes such as maintenance of endomembrane homeostasis, and endocytic-vacuolar pathway, lysosomal trafficking, nuclear transport, stress- or hormone-induced signaling and cell cycle progression. The PI(3,5)P2 regulatory complex regulates both the synthesis and turnover of phosphatidylinositol 3,5-bisphosphate (PtdIns(3,5)P2). Sole enzyme to catalyze the phosphorylation of phosphatidylinositol 3-phosphate on the fifth hydroxyl of the myo-inositol ring, to form (PtdIns(3,5)P2). Also catalyzes the phosphorylation of phosphatidylinositol on the fifth hydroxyl of the myo-inositol ring, to form phosphatidylinositol 5-phosphate (PtdIns(5)P). Has serine-protein kinase activity and is able to autophosphorylate and transphosphorylate. Autophosphorylation inhibits its own phosphatidylinositol 3-phosphate 5-kinase activity, stimulates FIG4 lipid phosphatase activity and down-regulates lipid product formation. Involved in key endosome operations such as fission and fusion in the course of endosomal cargo transport. Required for the maturation of early into late endosomes, phagosomes and lysosomes. Regulates vacuole maturation and nutrient recovery following engulfment of macromolecules, initiates the redistribution of accumulated lysosomal contents back into the endosome network. Critical regulator of the morphology, degradative activity, and protein turnover of the endolysosomal system in macrophages and platelets. In neutrophils, critical to perform chemotaxis, generate ROS, and undertake phagosome fusion with lysosomes. Plays a key role in the processing and presentation of antigens by major histocompatibility complex class II (MHC class II) mediated by CTSS. Regulates melanosome biogenesis by controlling the delivery of proteins from the endosomal compartment to the melanosome. Essential for systemic glucose homeostasis, mediates insulin-induced signals for endosome/actin remodeling in the course of GLUT4 translocation/glucose uptake activation. Supports microtubule-based endosome-to-trans-Golgi network cargo transport, through association with SPAG9 and RABEPK. Mediates EGFR trafficking to the nucleus. Its function is as follows. (Microbial infection) Required for cell entry of coronaviruses SARS-CoV and SARS-CoV-2, as well as human coronavirus EMC (HCoV-EMC) by endocytosis. The protein is 1-phosphatidylinositol 3-phosphate 5-kinase of Homo sapiens (Human).